The sequence spans 37 residues: Putative preoptic regulatory factor 1 (37 aa).

2 propeptides span residues 1–7 and 18–37; these read MPYSLQP and FPLC…PPDL.

It belongs to the GnRH family. Preoptic area and testis.

It is found in the secreted. Its function is as follows. Precursor for a gonadotropin regulatory hormone (GNRH) related decapeptide. The protein is Putative preoptic regulatory factor 1 (Porf1) of Rattus norvegicus (Rat).